The chain runs to 66 residues: Large ribosomal subunit protein uL30 (66 aa).

It belongs to the universal ribosomal protein uL30 family. Part of the 50S ribosomal subunit.

The sequence is that of Large ribosomal subunit protein uL30 from Brucella anthropi (strain ATCC 49188 / DSM 6882 / CCUG 24695 / JCM 21032 / LMG 3331 / NBRC 15819 / NCTC 12168 / Alc 37) (Ochrobactrum anthropi).